Here is a 170-residue protein sequence, read N- to C-terminus: Cytochrome b6-f complex subunit 4 (170 aa).

Transmembrane regions (helical) follow at residues Leu36–Val56, Leu95–Glu115, and Thr131–Ile151.

It belongs to the cytochrome b family. PetD subfamily. The 4 large subunits of the cytochrome b6-f complex are cytochrome b6, subunit IV (17 kDa polypeptide, petD), cytochrome f and the Rieske protein, while the 4 small subunits are petG, petL, petM and petN. The complex functions as a dimer.

Its subcellular location is the plastid. It is found in the chloroplast thylakoid membrane. Functionally, component of the cytochrome b6-f complex, which mediates electron transfer between photosystem II (PSII) and photosystem I (PSI), cyclic electron flow around PSI, and state transitions. The polypeptide is Cytochrome b6-f complex subunit 4 (Nymphaea alba (White water-lily)).